A 299-amino-acid chain; its full sequence is Ethylmalonyl-CoA decarboxylase (299 aa).

Lysine 209 bears the N6-acetyllysine; alternate mark. Lysine 209 is subject to N6-succinyllysine; alternate. An N6-succinyllysine modification is found at lysine 293.

This sequence belongs to the enoyl-CoA hydratase/isomerase family.

It localises to the cytoplasm. The protein localises to the cytosol. The enzyme catalyses (2S)-ethylmalonyl-CoA + H(+) = butanoyl-CoA + CO2. It carries out the reaction (S)-methylmalonyl-CoA + H(+) = propanoyl-CoA + CO2. The catalysed reaction is (2R)-ethylmalonyl-CoA + H(+) = butanoyl-CoA + CO2. Its function is as follows. Decarboxylates ethylmalonyl-CoA, a potentially toxic metabolite, to form butyryl-CoA, suggesting it might be involved in metabolite proofreading. Acts preferentially on (S)-ethylmalonyl-CoA but also has some activity on the (R)-isomer. Also has methylmalonyl-CoA decarboxylase activity at lower level. In Rattus norvegicus (Rat), this protein is Ethylmalonyl-CoA decarboxylase (Echdc1).